The primary structure comprises 107 residues: Insulin-like peptide 6 (107 aa).

The signal sequence occupies residues 1–33; that stretch reads MVLKVPTSKVLLVLATLFAVAAMISSWMPQVAA. 3 disulfide bridges follow: C48/C91, C60/C105, and C90/C96. Positions 67 to 76 are cleaved as a propeptide — connecting peptide; the sequence is LGDVFPNSFG.

This sequence belongs to the insulin family. As to quaternary structure, heterodimer of a B chain and an A chain linked by two disulfide bonds. Expressed at a low level in the larval gut.

It localises to the secreted. Possible ligand of InR/insulin-like receptor. In Drosophila melanogaster (Fruit fly), this protein is Insulin-like peptide 6.